Here is a 213-residue protein sequence, read N- to C-terminus: ATP-dependent dethiobiotin synthetase BioD (213 aa).

Residue 13 to 18 (GIGKTV) coordinates ATP. Thr-17 contributes to the Mg(2+) binding site. The active site involves Lys-33. Mg(2+) is bound at residue Glu-100. Residues 100-103 (EGAG) and 184-186 (PHL) each bind ATP.

Belongs to the dethiobiotin synthetase family. As to quaternary structure, homodimer. Requires Mg(2+) as cofactor.

It localises to the cytoplasm. It carries out the reaction (7R,8S)-7,8-diammoniononanoate + CO2 + ATP = (4R,5S)-dethiobiotin + ADP + phosphate + 3 H(+). It functions in the pathway cofactor biosynthesis; biotin biosynthesis; biotin from 7,8-diaminononanoate: step 1/2. In terms of biological role, catalyzes a mechanistically unusual reaction, the ATP-dependent insertion of CO2 between the N7 and N8 nitrogen atoms of 7,8-diaminopelargonic acid (DAPA, also called 7,8-diammoniononanoate) to form a ureido ring. The protein is ATP-dependent dethiobiotin synthetase BioD of Rhodopseudomonas palustris (strain BisA53).